The sequence spans 306 residues: Homoserine O-acetyltransferase (306 aa).

Cys142 serves as the catalytic Acyl-thioester intermediate. The substrate site is built by Lys163 and Ser192. His235 (proton acceptor) is an active-site residue. The active site involves Glu237. Arg249 is a substrate binding site.

This sequence belongs to the MetA family.

The protein resides in the cytoplasm. The catalysed reaction is L-homoserine + acetyl-CoA = O-acetyl-L-homoserine + CoA. It participates in amino-acid biosynthesis; L-methionine biosynthesis via de novo pathway; O-acetyl-L-homoserine from L-homoserine: step 1/1. Functionally, transfers an acetyl group from acetyl-CoA to L-homoserine, forming acetyl-L-homoserine. The sequence is that of Homoserine O-acetyltransferase from Brevibacillus brevis (strain 47 / JCM 6285 / NBRC 100599).